Here is a 288-residue protein sequence, read N- to C-terminus: Glucose-1-phosphate thymidylyltransferase (288 aa).

Gly8 contacts dTDP-alpha-D-glucose. DTTP-binding residues include Gly8, Gly11, Thr12, Arg13, Lys23, Gln24, Gln80, Gly85, and Asp108. 11 residues coordinate dTDP-alpha-D-glucose: Lys23, Gln24, Gln80, Gly85, Asp108, Asn109, Gly143, Glu158, Lys159, Val169, and Asp222. Asp108 contacts Mg(2+). Asp222 provides a ligand contact to Mg(2+).

This sequence belongs to the glucose-1-phosphate thymidylyltransferase family. Mg(2+) is required as a cofactor.

The enzyme catalyses dTTP + alpha-D-glucose 1-phosphate + H(+) = dTDP-alpha-D-glucose + diphosphate. Its pathway is carbohydrate biosynthesis; dTDP-L-rhamnose biosynthesis. In terms of biological role, catalyzes the conversion of glucose-1-phosphate and dTTP to dTDP-glucose and pyrophosphate. Involved in the biosynthesis of the dTDP-L-rhamnose which is a component of the critical linker, D-N-acetylglucosamine-L-rhamnose disaccharide, which connects the galactan region of arabinogalactan to peptidoglycan via a phosphodiester linkage. The polypeptide is Glucose-1-phosphate thymidylyltransferase (rmlA) (Mycolicibacterium smegmatis (strain ATCC 700084 / mc(2)155) (Mycobacterium smegmatis)).